The following is a 130-amino-acid chain: Large ribosomal subunit protein uL14 (130 aa).

This sequence belongs to the universal ribosomal protein uL14 family. As to quaternary structure, part of the 50S ribosomal subunit. Forms a cluster with proteins L3 and L19. In the 70S ribosome, L14 and L19 interact and together make contacts with the 16S rRNA in bridges B5 and B8.

In terms of biological role, binds to 23S rRNA. Forms part of two intersubunit bridges in the 70S ribosome. This chain is Large ribosomal subunit protein uL14, found in Leptospira interrogans serogroup Icterohaemorrhagiae serovar copenhageni (strain Fiocruz L1-130).